We begin with the raw amino-acid sequence, 121 residues long: Chronic lymphocytic leukemia up-regulated protein 1 (121 aa).

In terms of tissue distribution, specifically expressed in chronic lymphocytic leukemia (CLL) cells from patients without immunoglobulin heavy-chain hypermutations. Expression is detected in all CLL cells and levels are similar in patients before and after treatment.

It localises to the cytoplasm. This chain is Chronic lymphocytic leukemia up-regulated protein 1 (CLLU1), found in Homo sapiens (Human).